Consider the following 85-residue polypeptide: UPF0335 protein Oant_1161 (85 aa).

Belongs to the UPF0335 family.

The protein is UPF0335 protein Oant_1161 of Brucella anthropi (strain ATCC 49188 / DSM 6882 / CCUG 24695 / JCM 21032 / LMG 3331 / NBRC 15819 / NCTC 12168 / Alc 37) (Ochrobactrum anthropi).